A 1071-amino-acid polypeptide reads, in one-letter code: ATP-dependent helicase/deoxyribonuclease subunit B (1071 aa).

The protein belongs to the helicase family. AddB/RexB type 2 subfamily. In terms of assembly, heterodimer of AddA and RexB. Mg(2+) is required as a cofactor.

Its function is as follows. The heterodimer acts as both an ATP-dependent DNA helicase and an ATP-dependent, dual-direction single-stranded exonuclease. Recognizes the chi site generating a DNA molecule suitable for the initiation of homologous recombination. This subunit has 5' -&gt; 3' nuclease activity but not helicase activity. This is ATP-dependent helicase/deoxyribonuclease subunit B from Streptococcus pyogenes serotype M18 (strain MGAS8232).